We begin with the raw amino-acid sequence, 37 residues long: 24 kDa antigen (37 aa).

The chain is 24 kDa antigen from Plasmodium chabaudi.